The primary structure comprises 74 residues: uncharacterized protein (74 aa).

This is an uncharacterized protein from Avena sativa (Oat).